The primary structure comprises 503 residues: Cytochrome P450 3A14 (503 aa).

Cys442 contributes to the heme binding site.

This sequence belongs to the cytochrome P450 family. Heme serves as cofactor.

The protein localises to the endoplasmic reticulum membrane. The protein resides in the microsome membrane. The catalysed reaction is an organic molecule + reduced [NADPH--hemoprotein reductase] + O2 = an alcohol + oxidized [NADPH--hemoprotein reductase] + H2O + H(+). Functionally, cytochromes P450 are a group of heme-thiolate monooxygenases. In liver microsomes, this enzyme is involved in an NADPH-dependent electron transport pathway. It oxidizes a variety of structurally unrelated compounds, including steroids, fatty acids, and xenobiotics. The chain is Cytochrome P450 3A14 (CYP3A14) from Cavia porcellus (Guinea pig).